Consider the following 332-residue polypeptide: Tetraacyldisaccharide 4'-kinase (332 aa).

60–67 is an ATP binding site; sequence TVGGTGKT.

The protein belongs to the LpxK family.

It catalyses the reaction a lipid A disaccharide + ATP = a lipid IVA + ADP + H(+). It participates in glycolipid biosynthesis; lipid IV(A) biosynthesis; lipid IV(A) from (3R)-3-hydroxytetradecanoyl-[acyl-carrier-protein] and UDP-N-acetyl-alpha-D-glucosamine: step 6/6. In terms of biological role, transfers the gamma-phosphate of ATP to the 4'-position of a tetraacyldisaccharide 1-phosphate intermediate (termed DS-1-P) to form tetraacyldisaccharide 1,4'-bis-phosphate (lipid IVA). In Pseudomonas paraeruginosa (strain DSM 24068 / PA7) (Pseudomonas aeruginosa (strain PA7)), this protein is Tetraacyldisaccharide 4'-kinase.